Consider the following 135-residue polypeptide: ATP synthase epsilon chain, chloroplastic (135 aa).

It belongs to the ATPase epsilon chain family. F-type ATPases have 2 components, CF(1) - the catalytic core - and CF(0) - the membrane proton channel. CF(1) has five subunits: alpha(3), beta(3), gamma(1), delta(1), epsilon(1). CF(0) has three main subunits: a, b and c.

Its subcellular location is the plastid. The protein resides in the chloroplast thylakoid membrane. Functionally, produces ATP from ADP in the presence of a proton gradient across the membrane. The polypeptide is ATP synthase epsilon chain, chloroplastic (Euglena gracilis).